The following is a 1529-amino-acid chain: ATP-dependent permease PDR15 (1529 aa).

A compositionally biased stretch (basic and acidic residues) spans 1–13 (MSSDIRDVEERNS). The interval 1-38 (MSSDIRDVEERNSRSSSSSSSSNSAAQSIGQHPYRGFD) is disordered. Residues 1–531 (MSSDIRDVEE…NFWRMKQSAS (531 aa)) lie on the Cytoplasmic side of the membrane. Low complexity predominate over residues 14–24 (RSSSSSSSSNS). The ABC transporter 1 domain maps to 171–420 (LRLLKPSKEE…FQDMGYYCPP (250 aa)). Residues 532-552 (VTLWQVIGNSVMAFILGSMFY) form a helical membrane-spanning segment. Residues 553 to 567 (KVMKKNDTSTFYFRG) lie on the Extracellular side of the membrane. Asn-558 carries N-linked (GlcNAc...) asparagine glycosylation. Residues 568 to 588 (AAMFFAILFNAFSCLLEIFSL) traverse the membrane as a helical segment. The Cytoplasmic portion of the chain corresponds to 589 to 617 (YETRPITEKHRTYSLYHPSADAFASVLSE). Residues 618-638 (MPPKLITAVCFNIIFYFLVDF) form a helical membrane-spanning segment. The Extracellular segment spans residues 639 to 642 (RRNG). Residues 643-663 (GVFFFYFLINVIATFTLSHLF) traverse the membrane as a helical segment. The Cytoplasmic segment spans residues 664-699 (RCVGSLTKTLQEAMVPASMLLLAISMYTGFAIPKTK). The helical transmembrane segment at 700–720 (ILGWSIWIWYINPLAYLFESL) threads the bilayer. At 721–783 (MINEFHDRRF…YDYEHKHKWR (63 aa)) the chain is on the extracellular side. N-linked (GlcNAc...) asparagine glycosylation occurs at Asn-744. Residues 784–804 (GFGIGMAYVVFFFFVYLILCE) form a helical membrane-spanning segment. The Cytoplasmic portion of the chain corresponds to 805-1219 (YNEGAKQKGE…LFQQYWRSPD (415 aa)). Basic and acidic residues predominate over residues 829–840 (EGKLQEKHRPGD). The tract at residues 829-873 (EGKLQEKHRPGDIENNAGSSPDSATTEKKILDDSSEGSDSSSDNA) is disordered. The ABC transporter 2 domain occupies 884 to 1127 (FHWRDLCYDV…MIDYFESKGA (244 aa)). ATP is bound at residue 920 to 927 (GASGAGKT). Residues 1220–1240 (YLWSKFILTIFNQVFIGFTFF) traverse the membrane as a helical segment. Residues 1241–1312 (KADRSLQGLQ…VEIPWNILAG (72 aa)) lie on the Extracellular side of the membrane. Residues 1313-1333 (TIAYCIYYYAVGFYANASAAG) form a helical membrane-spanning segment. The Cytoplasmic portion of the chain corresponds to 1334–1340 (QLHERGA). A helical transmembrane segment spans residues 1341–1361 (LFWLFSIAFYVYIGSMGLLMI). Over 1362 to 1368 (SFNEVAE) the chain is Extracellular. The helical transmembrane segment at 1369-1389 (TAAHMGTLLFTMALSFCGVMA) threads the bilayer. Over 1390 to 1396 (TPKVMPR) the chain is Cytoplasmic. The helical transmembrane segment at 1397–1417 (FWIFMYRVSPLTYMIDALLAL) threads the bilayer. At 1418–1492 (GVANVDVKCS…SSHYYRRWRN (75 aa)) the chain is on the extracellular side. The chain crosses the membrane as a helical span at residues 1493–1513 (YGIFICYIAFDYIAATFLYWL). At 1514–1529 (SRVPKKNGKISEKPKK) the chain is on the cytoplasmic side.

This sequence belongs to the ABC transporter superfamily. ABCG family. PDR (TC 3.A.1.205) subfamily.

It is found in the membrane. The protein is ATP-dependent permease PDR15 (PDR15) of Saccharomyces cerevisiae (strain ATCC 204508 / S288c) (Baker's yeast).